The sequence spans 310 residues: Olfactory receptor 5P54 (310 aa).

The Extracellular segment spans residues 1 to 25; it reads MNGGNHTSMTELFILGPTEDPTFCI. The N-linked (GlcNAc...) asparagine glycan is linked to N5. A helical membrane pass occupies residues 26-46; it reads AFFVIFLGVYMVTLVGNISII. Over 47 to 54 the chain is Cytoplasmic; it reads TLIRISSQ. Residues 55-75 form a helical membrane-spanning segment; the sequence is LHTPVYLFLNHLAFVDILYST. The Extracellular portion of the chain corresponds to 76 to 99; the sequence is LVSVIMLMELLEHELALPVAACAA. Cysteines 97 and 189 form a disulfide. The helical transmembrane segment at 100–120 threads the bilayer; it reads ELCITVLFGSSECFLLAAMAY. Residues 121–133 are Cytoplasmic-facing; that stretch reads DCYVAICSPLLYS. A helical transmembrane segment spans residues 134 to 154; that stretch reads TLMSSRVCFLLLGMSYVGGCM. Over 155-196 the chain is Extracellular; the sequence is NGWIFTGCLLNLSFYGPYQIDHFFCDFSPLLKLSCSDVSIIG. The N-linked (GlcNAc...) asparagine glycan is linked to N165. Residues 197–217 form a helical membrane-spanning segment; sequence IIPSISSGSIIVVTVLVIAVF. Residues 218–237 are Cytoplasmic-facing; that stretch reads YICILMTILKMHSTDGCHKA. Residues 238-258 traverse the membrane as a helical segment; it reads FSTCNSYLTAVTLYYGTITFI. Topologically, residues 259 to 271 are extracellular; it reads YVMPKSNYSTEKN. Residue N265 is glycosylated (N-linked (GlcNAc...) asparagine). The helical transmembrane segment at 272–292 threads the bilayer; the sequence is KVLSEFYTVVIPMLNHLIYSL. At 293–310 the chain is on the cytoplasmic side; it reads KNRDVKDALRKAIVRVYT.

It belongs to the G-protein coupled receptor 1 family.

It localises to the cell membrane. In terms of biological role, potential odorant receptor. The protein is Olfactory receptor 5P54 of Mus musculus (Mouse).